The following is a 218-amino-acid chain: Protein-L-isoaspartate O-methyltransferase (218 aa).

Residue Ser-60 is part of the active site.

The protein belongs to the methyltransferase superfamily. L-isoaspartyl/D-aspartyl protein methyltransferase family.

It localises to the cytoplasm. It catalyses the reaction [protein]-L-isoaspartate + S-adenosyl-L-methionine = [protein]-L-isoaspartate alpha-methyl ester + S-adenosyl-L-homocysteine. In terms of biological role, catalyzes the methyl esterification of L-isoaspartyl residues in peptides and proteins that result from spontaneous decomposition of normal L-aspartyl and L-asparaginyl residues. It plays a role in the repair and/or degradation of damaged proteins. This is Protein-L-isoaspartate O-methyltransferase from Roseiflexus castenholzii (strain DSM 13941 / HLO8).